The chain runs to 782 residues: Protein PAT1 homolog 1 (782 aa).

Disordered regions lie at residues glycine 96–proline 153, leucine 177–proline 217, valine 332–methionine 372, and glutamate 460–leucine 481. Residues serine 108 to serine 117 are compositionally biased toward low complexity. Residues glycine 208–proline 217 show a composition bias toward polar residues. Residues histidine 335 to arginine 347 show a composition bias toward basic residues. Residues glycine 348–glutamine 366 show a composition bias toward polar residues. Positions serine 471–leucine 481 are enriched in basic and acidic residues.

In terms of assembly, interacts with AFPH2/NINJA. In terms of tissue distribution, expressed in root vasculature, shoot apical meristem (SAM) and leaves.

In terms of biological role, activator of mRNA decapping. Involved in mRNA decay via decapping. Involved in the regulation of root stem cell niche identity. Maintains root stem cell niche stability through the interaction with the negative regulator of jasmonate signaling AFPH2/NINJA, and the regulation of cell division. The protein is Protein PAT1 homolog 1 of Arabidopsis thaliana (Mouse-ear cress).